The sequence spans 382 residues: Putative glutamate--cysteine ligase 2-1 (382 aa).

This sequence belongs to the glutamate--cysteine ligase type 2 family. YbdK subfamily.

It carries out the reaction L-cysteine + L-glutamate + ATP = gamma-L-glutamyl-L-cysteine + ADP + phosphate + H(+). Functionally, ATP-dependent carboxylate-amine ligase which exhibits weak glutamate--cysteine ligase activity. The polypeptide is Putative glutamate--cysteine ligase 2-1 (Frankia alni (strain DSM 45986 / CECT 9034 / ACN14a)).